The primary structure comprises 248 residues: Ras-like protein family member 11B (248 aa).

Residues 30–248 (ASSRVIKIAV…SSKVRTATSV (219 aa)) form a small GTPase-like region. Residues 41–48 (GGSGVGKT), 88–99 (DTPGVQINEQNL), and 153–156 (NKAD) each bind GTP. Residues 206-228 (QNTGTSERRKNSIIPRPKSPNMQ) form a disordered region.

The protein belongs to the small GTPase superfamily. Ras family.

The catalysed reaction is GTP + H2O = GDP + phosphate + H(+). The protein is Ras-like protein family member 11B of Xenopus laevis (African clawed frog).